Consider the following 103-residue polypeptide: Small ribosomal subunit protein uS10 (103 aa).

Belongs to the universal ribosomal protein uS10 family. As to quaternary structure, part of the 30S ribosomal subunit.

Involved in the binding of tRNA to the ribosomes. This chain is Small ribosomal subunit protein uS10, found in Chlorobium phaeobacteroides (strain DSM 266 / SMG 266 / 2430).